The primary structure comprises 230 residues: Orotidine 5'-phosphate decarboxylase (230 aa).

Substrate is bound by residues Asp10, Lys31, 58 to 67 (DLKLHDIPNT), Thr117, Arg179, Gln188, Gly208, and Arg209. The active-site Proton donor is Lys60. The tract at residues 177-196 (GIRPKDASSDDQKRITTPED) is disordered. The segment covering 179–196 (RPKDASSDDQKRITTPED) has biased composition (basic and acidic residues).

The protein belongs to the OMP decarboxylase family. Type 1 subfamily. Homodimer.

It catalyses the reaction orotidine 5'-phosphate + H(+) = UMP + CO2. The protein operates within pyrimidine metabolism; UMP biosynthesis via de novo pathway; UMP from orotate: step 2/2. In terms of biological role, catalyzes the decarboxylation of orotidine 5'-monophosphate (OMP) to uridine 5'-monophosphate (UMP). The protein is Orotidine 5'-phosphate decarboxylase of Staphylococcus saprophyticus subsp. saprophyticus (strain ATCC 15305 / DSM 20229 / NCIMB 8711 / NCTC 7292 / S-41).